A 135-amino-acid polypeptide reads, in one-letter code: Large ribosomal subunit protein mL54 (135 aa).

The protein belongs to the mitochondrion-specific ribosomal protein mL54 family. As to quaternary structure, component of the mitochondrial ribosome large subunit (39S) which comprises a 16S rRNA and about 50 distinct proteins.

The protein resides in the mitochondrion. This chain is Large ribosomal subunit protein mL54 (mrpl54), found in Danio rerio (Zebrafish).